Here is a 546-residue protein sequence, read N- to C-terminus: CTP synthase (546 aa).

The tract at residues 1–265 (MTKYVFVTGG…DEIVCHKLNI (265 aa)) is amidoligase domain. S13 is a binding site for CTP. Residue S13 participates in UTP binding. Residues 14 to 19 (SLGKGI) and D71 contribute to the ATP site. Mg(2+) contacts are provided by D71 and E139. Residues 146 to 148 (DIE), 186 to 191 (KTKPTQ), and K222 each bind CTP. Residues 186–191 (KTKPTQ) and K222 contribute to the UTP site. The Glutamine amidotransferase type-1 domain maps to 290–543 (NIAFVGKYVD…VRAALAHQQK (254 aa)). G351 contributes to the L-glutamine binding site. C378 functions as the Nucleophile; for glutamine hydrolysis in the catalytic mechanism. Residues 379-382 (LGMQ), E402, and R469 each bind L-glutamine. Active-site residues include H516 and E518.

Belongs to the CTP synthase family. Homotetramer.

The catalysed reaction is UTP + L-glutamine + ATP + H2O = CTP + L-glutamate + ADP + phosphate + 2 H(+). It carries out the reaction L-glutamine + H2O = L-glutamate + NH4(+). It catalyses the reaction UTP + NH4(+) + ATP = CTP + ADP + phosphate + 2 H(+). It participates in pyrimidine metabolism; CTP biosynthesis via de novo pathway; CTP from UDP: step 2/2. Its activity is regulated as follows. Allosterically activated by GTP, when glutamine is the substrate; GTP has no effect on the reaction when ammonia is the substrate. The allosteric effector GTP functions by stabilizing the protein conformation that binds the tetrahedral intermediate(s) formed during glutamine hydrolysis. Inhibited by the product CTP, via allosteric rather than competitive inhibition. Functionally, catalyzes the ATP-dependent amination of UTP to CTP with either L-glutamine or ammonia as the source of nitrogen. Regulates intracellular CTP levels through interactions with the four ribonucleotide triphosphates. The polypeptide is CTP synthase (Thiobacillus denitrificans (strain ATCC 25259 / T1)).